The chain runs to 173 residues: Crossover junction endodeoxyribonuclease RuvC (173 aa).

Active-site residues include Asp8, Glu67, and Asp139. The Mg(2+) site is built by Asp8, Glu67, and Asp139.

Belongs to the RuvC family. As to quaternary structure, homodimer which binds Holliday junction (HJ) DNA. The HJ becomes 2-fold symmetrical on binding to RuvC with unstacked arms; it has a different conformation from HJ DNA in complex with RuvA. In the full resolvosome a probable DNA-RuvA(4)-RuvB(12)-RuvC(2) complex forms which resolves the HJ. The cofactor is Mg(2+).

It is found in the cytoplasm. The enzyme catalyses Endonucleolytic cleavage at a junction such as a reciprocal single-stranded crossover between two homologous DNA duplexes (Holliday junction).. Its function is as follows. The RuvA-RuvB-RuvC complex processes Holliday junction (HJ) DNA during genetic recombination and DNA repair. Endonuclease that resolves HJ intermediates. Cleaves cruciform DNA by making single-stranded nicks across the HJ at symmetrical positions within the homologous arms, yielding a 5'-phosphate and a 3'-hydroxyl group; requires a central core of homology in the junction. The consensus cleavage sequence is 5'-(A/T)TT(C/G)-3'. Cleavage occurs on the 3'-side of the TT dinucleotide at the point of strand exchange. HJ branch migration catalyzed by RuvA-RuvB allows RuvC to scan DNA until it finds its consensus sequence, where it cleaves and resolves the cruciform DNA. The polypeptide is Crossover junction endodeoxyribonuclease RuvC (Shewanella oneidensis (strain ATCC 700550 / JCM 31522 / CIP 106686 / LMG 19005 / NCIMB 14063 / MR-1)).